We begin with the raw amino-acid sequence, 692 residues long: Glycine--tRNA ligase beta subunit (692 aa).

It belongs to the class-II aminoacyl-tRNA synthetase family. In terms of assembly, tetramer of two alpha and two beta subunits.

The protein localises to the cytoplasm. It catalyses the reaction tRNA(Gly) + glycine + ATP = glycyl-tRNA(Gly) + AMP + diphosphate. The protein is Glycine--tRNA ligase beta subunit of Alteromonas mediterranea (strain DSM 17117 / CIP 110805 / LMG 28347 / Deep ecotype).